Reading from the N-terminus, the 542-residue chain is Gamma-terpinene synthase 1 (542 aa).

Residues Asp295 and Asp299 each coordinate Mn(2+). The short motif at 295 to 299 (DDVYD) is the DDXXD motif element. 2 homodimerization regions span residues 301–307 (YDTLDEL) and 373–410 (EAKWYYAGYTPTLAEYLENAKVSISSPTIISQVYFTLP). Mn(2+) is bound by residues Asp439 and Glu447.

It belongs to the terpene synthase family. As to quaternary structure, homodimer. The cofactor is Mn(2+). Mg(2+) serves as cofactor. Mostly expressed in flowers and, to a lower extent, in leaves, especially in glandular trichomes.

The enzyme catalyses (2E)-geranyl diphosphate = gamma-terpinene + diphosphate. The catalysed reaction is (2E)-geranyl diphosphate = alpha-terpinene + diphosphate. It participates in secondary metabolite biosynthesis; terpenoid biosynthesis. Its function is as follows. Involved in the biosynthesis of phenolic monoterpenes natural products thymol and carvacrol which have a broad range of biological activities acting as antimicrobial compounds, insecticides, antioxidants and pharmaceutical agents. Monoterpene synthase which catalyzes the conversion of geranyl diphosphate (GPP) to gamma-terpinene and the minor products alpha-thujene, alpha-terpinene, myrcene, sabinene, (+)-R-limonene, alpha-pinene and alpha-phellandrene. The polypeptide is Gamma-terpinene synthase 1 (Thymus vulgaris (Thyme)).